The chain runs to 346 residues: Autoinducer 2 import system permease protein LsrC (346 aa).

9 helical membrane-spanning segments follow: residues 13–33 (LLAI…YLSV), 38–58 (MVFS…MVML), 71–91 (GMCA…PVAC), 92–112 (LATL…VAWL), 114–134 (IPAI…MLLW), 154–174 (VFLG…LMAW), 212–232 (LNGG…GFIP), 248–268 (VLGG…ILGA), and 283–303 (IPAW…LVFD).

It belongs to the binding-protein-dependent transport system permease family. AraH/RbsC subfamily. In terms of assembly, the complex is composed of two ATP-binding proteins (LsrA), two transmembrane proteins (LsrC and LsrD) and a solute-binding protein (LsrB).

The protein resides in the cell inner membrane. Functionally, part of the ABC transporter complex LsrABCD involved in autoinducer 2 (AI-2) import. Probably responsible for the translocation of the substrate across the membrane. The polypeptide is Autoinducer 2 import system permease protein LsrC (lsrC) (Salmonella paratyphi B (strain ATCC BAA-1250 / SPB7)).